A 432-amino-acid chain; its full sequence is Probable D-serine dehydratase (432 aa).

K112 carries the N6-(pyridoxal phosphate)lysine modification.

This sequence belongs to the serine/threonine dehydratase family. DsdA subfamily. Pyridoxal 5'-phosphate is required as a cofactor.

It catalyses the reaction D-serine = pyruvate + NH4(+). In Pediococcus pentosaceus (strain ATCC 25745 / CCUG 21536 / LMG 10740 / 183-1w), this protein is Probable D-serine dehydratase.